A 217-amino-acid chain; its full sequence is Ribosomal RNA small subunit methyltransferase G (217 aa).

Residues glycine 76, phenylalanine 81, 128–129 (LE), and arginine 142 contribute to the S-adenosyl-L-methionine site.

The protein belongs to the methyltransferase superfamily. RNA methyltransferase RsmG family.

Its subcellular location is the cytoplasm. It catalyses the reaction guanosine(527) in 16S rRNA + S-adenosyl-L-methionine = N(7)-methylguanosine(527) in 16S rRNA + S-adenosyl-L-homocysteine. Its function is as follows. Specifically methylates the N7 position of guanine in position 527 of 16S rRNA. The protein is Ribosomal RNA small subunit methyltransferase G of Rhizorhabdus wittichii (strain DSM 6014 / CCUG 31198 / JCM 15750 / NBRC 105917 / EY 4224 / RW1) (Sphingomonas wittichii).